The following is a 417-amino-acid chain: Putative competence-damage inducible protein (417 aa).

The protein belongs to the CinA family.

The sequence is that of Putative competence-damage inducible protein from Oceanobacillus iheyensis (strain DSM 14371 / CIP 107618 / JCM 11309 / KCTC 3954 / HTE831).